Here is a 399-residue protein sequence, read N- to C-terminus: 1-deoxy-D-xylulose 5-phosphate reductoisomerase (399 aa).

The NADPH site is built by Thr10, Gly11, Ser12, Ile13, and Asn124. Lys125 is a 1-deoxy-D-xylulose 5-phosphate binding site. Glu126 serves as a coordination point for NADPH. Asp150 lines the Mn(2+) pocket. Residues Ser151, Glu152, Ser186, and His209 each contribute to the 1-deoxy-D-xylulose 5-phosphate site. Glu152 contributes to the Mn(2+) binding site. Gly215 contributes to the NADPH binding site. 1-deoxy-D-xylulose 5-phosphate-binding residues include Ser222, Asn227, Lys228, and Glu231. Glu231 provides a ligand contact to Mn(2+).

The protein belongs to the DXR family. Mg(2+) serves as cofactor. It depends on Mn(2+) as a cofactor.

The catalysed reaction is 2-C-methyl-D-erythritol 4-phosphate + NADP(+) = 1-deoxy-D-xylulose 5-phosphate + NADPH + H(+). The protein operates within isoprenoid biosynthesis; isopentenyl diphosphate biosynthesis via DXP pathway; isopentenyl diphosphate from 1-deoxy-D-xylulose 5-phosphate: step 1/6. In terms of biological role, catalyzes the NADPH-dependent rearrangement and reduction of 1-deoxy-D-xylulose-5-phosphate (DXP) to 2-C-methyl-D-erythritol 4-phosphate (MEP). The sequence is that of 1-deoxy-D-xylulose 5-phosphate reductoisomerase from Psychromonas ingrahamii (strain DSM 17664 / CCUG 51855 / 37).